The following is a 333-amino-acid chain: DNA-directed RNA polymerase subunit alpha (333 aa).

Residues 1 to 234 (MQSSVNEFLT…QQLAAFVDLK (234 aa)) are alpha N-terminal domain (alpha-NTD). An alpha C-terminal domain (alpha-CTD) region spans residues 248–333 (IDPILLRPVD…SLKKDDKATA (86 aa)).

Belongs to the RNA polymerase alpha chain family. As to quaternary structure, homodimer. The RNAP catalytic core consists of 2 alpha, 1 beta, 1 beta' and 1 omega subunit. When a sigma factor is associated with the core the holoenzyme is formed, which can initiate transcription.

It catalyses the reaction RNA(n) + a ribonucleoside 5'-triphosphate = RNA(n+1) + diphosphate. Its function is as follows. DNA-dependent RNA polymerase catalyzes the transcription of DNA into RNA using the four ribonucleoside triphosphates as substrates. This chain is DNA-directed RNA polymerase subunit alpha, found in Pseudomonas putida (Arthrobacter siderocapsulatus).